We begin with the raw amino-acid sequence, 85 residues long: U4-theraphotoxin-Hhn1a (85 aa).

The first 22 residues, 1-22 (MKVTLIAILTCAAVLVLHTTAE), serve as a signal peptide directing secretion. The propeptide occupies 23–48 (EELEAESQLMEVGMPDTELAAVDEER). 3 disulfides stabilise this stretch: cysteine 52–cysteine 66, cysteine 56–cysteine 77, and cysteine 71–cysteine 82.

This sequence belongs to the neurotoxin 12 (Hwtx-2) family. 02 (Hwtx-2) subfamily. Monomer. As to expression, expressed by the venom gland.

It is found in the secreted. Neurotoxin active on both insects and mammals. In Cyriopagopus hainanus (Chinese bird spider), this protein is U4-theraphotoxin-Hhn1a.